A 438-amino-acid chain; its full sequence is Asparagine--tRNA ligase (438 aa).

Belongs to the class-II aminoacyl-tRNA synthetase family. As to quaternary structure, homodimer.

The protein resides in the cytoplasm. The enzyme catalyses tRNA(Asn) + L-asparagine + ATP = L-asparaginyl-tRNA(Asn) + AMP + diphosphate + H(+). The sequence is that of Asparagine--tRNA ligase from Thermus thermophilus (strain ATCC BAA-163 / DSM 7039 / HB27).